Reading from the N-terminus, the 540-residue chain is Receptor-interacting serine/threonine-protein kinase 2 (540 aa).

The Protein kinase domain occupies 18-294 (LADLRYLSRG…KCLIELEPVL (277 aa)). ATP is bound by residues 24–32 (LSRGASGTV) and Lys-47. The interval 65–73 (REAEILHKA) is helix alphaC. Asp-146 (proton acceptor) is an active-site residue. The tract at residues 167–193 (LSKWRMMSLSQSRSSKSAPEGGTIVYM) is activation segment (AS). Residue Ser-168 is modified to Phosphoserine. Ser-174 carries the phosphoserine; alternate modification. Ser-176 is subject to Phosphoserine; by autocatalysis. The residue at position 178 (Ser-178) is a Phosphoserine; alternate. At Ser-180 the chain carries Phosphoserine. A Phosphoserine; alternate modification is found at Ser-181. Lys-209 is covalently cross-linked (Glycyl lysine isopeptide (Lys-Gly) (interchain with G-Cter in ubiquitin)). A disordered region spans residues 318–367 (SRTVHLSDKKKRELSPNIPVNSGPREESCGSSQLHKTSGSPGTSRSLSAP). The segment covering 322–331 (HLSDKKKREL) has biased composition (basic and acidic residues). Positions 346–366 (CGSSQLHKTSGSPGTSRSLSA) are enriched in polar residues. A phosphoserine mark is found at Ser-363 and Ser-391. Positions 432–524 (GIAQQWIQSK…LQPYPEILVL (93 aa)) constitute a CARD domain. Tyr-472 carries the phosphotyrosine; by autocatalysis modification. Residues Ser-525, Ser-527, and Ser-529 each carry the phosphoserine modification. Lys-536 is covalently cross-linked (Glycyl lysine isopeptide (Lys-Gly) (interchain with G-Cter in ubiquitin)). A Phosphoserine modification is found at Ser-537.

This sequence belongs to the protein kinase superfamily. TKL Ser/Thr protein kinase family. As to quaternary structure, interacts (via CARD domain) with NOD2 (via CARD domain). Interacts (via CARD domain) with NOD1 (via CARD domain). Homooligomer; following interaction with NOD1 or NOD2, homooligomerizes via its CARD domain and forms long filaments named RIPosomes. Found in a signaling complex consisting of at least ARHGEF2, NOD2 and RIPK2. Interacts with ARHGEF2; the interaction mediates tyrosine phosphorylation of RIPK2 by Src kinase CSK. Interacts with MAP3K4; this interaction sequesters RIPK2 from the NOD2 signaling pathway. Interacts with IKBKG/NEMO. The polyubiquitinated protein interacts with MAP3K7/TAK1; interaction is indirect and is mediated by TAB2 and TAB3 that bind to polyubiquitin chains attached to RIPK2. Binds to CFLAR/CLARP and CASP1 via their CARD domains. Binds to BIRC3/c-IAP1 and BIRC2/c-IAP2, TRAF1, TRAF2, TRAF5 and TRAF6. Interacts with NLRP10. Interacts with CARD9. Interacts with INAVA; the interaction takes place upon PRR stimulation. Interacts (via CARD domain) with NGFR (via death domain). Interacts with IRGM; promoting RIPK2 degradation. In terms of processing, polyubiquitinated via both 'Lys-63'- and 'Met-1'-linked polyubiquitin following recruitment by NOD1 or NOD2, creating docking sites for downstream effectors, triggering activation of the NF-kappa-B and MAP kinases signaling. 'Lys-63'-linked polyubiquitination by XIAP is essential for NOD2 signaling and promotes recruitment of the LUBAC complex. Also polyubiquitinated with 'Lys-63'-linked chains by PELI3, BIRC2/c-IAP1 and BIRC3/c-IAP2. Ubiquitinated on Lys-209 via 'Lys-63'-linked by ITCH. Undergoes 'Lys-63'-linked deubiquitination by MYSM1 to attenuate NOD2-mediated inflammation and tissue damage. Polyubiquitinated with 'Lys-63'-linked chains in response to Shigella infection, promoting its SQSTM1/p62-dependent autophagic degradation. Undergoes 'Met-1'-linked polyubiquitination; the head-to-tail linear polyubiquitination is mediated by the LUBAC complex in response to NOD2 stimulation 'Met-1'-linked polyubiquitination. 'Lys-63'-linked polyubiquitination by XIAP is required for recruimtent of the LUBAC complex and subsequent. Linear polyubiquitination is restricted by FAM105B/otulin, probably to limit NOD2-dependent pro-inflammatory signaling activation of NF-kappa-B. Post-translationally, autophosphorylated. Phosphorylated at Ser-176, either via autophosphorylation or by LRRK2, enhancing activity. Autophosphorylation at Tyr-472 is required for effective NOD2 signaling. Autophosphorylation is however not essential for NOD2 signaling. Degraded via selective autophagy following interaction with IRGM. IRGM promotes NOD1/NOD2-RIPK2 RIPosome recruitment to autophagosome membranes. RIPK2 biquitinated via 'Lys-63'-linked chains is then recognized by SQSTM1/p62, leading to the SQSTM1/p62-dependent autophagic degradation of the NOD1/NOD2-RIPK2 RIPosome.

The protein resides in the cytoplasm. It is found in the cell membrane. The protein localises to the endoplasmic reticulum. It catalyses the reaction L-seryl-[protein] + ATP = O-phospho-L-seryl-[protein] + ADP + H(+). It carries out the reaction L-threonyl-[protein] + ATP = O-phospho-L-threonyl-[protein] + ADP + H(+). The catalysed reaction is L-tyrosyl-[protein] + ATP = O-phospho-L-tyrosyl-[protein] + ADP + H(+). With respect to regulation, in the inactive state, the helix alphaC is packed against the helical, non-phosphorylated activation segment (AS). Upon activation, helix alphaC is displaced and the phosphorylated AS becomes disordered. In terms of biological role, serine/threonine/tyrosine-protein kinase that plays an essential role in modulation of innate and adaptive immune responses. Acts as a key effector of NOD1 and NOD2 signaling pathways: upon activation by bacterial peptidoglycans, NOD1 and NOD2 oligomerize and recruit RIPK2 via CARD-CARD domains, leading to the formation of RIPK2 filaments. Once recruited, RIPK2 autophosphorylates and undergoes 'Lys-63'-linked polyubiquitination by E3 ubiquitin ligases XIAP, BIRC2 and BIRC3, as well as 'Met-1'-linked (linear) polyubiquitination by the LUBAC complex, becoming a scaffolding protein for downstream effectors. 'Met-1'-linked polyubiquitin chains attached to RIPK2 recruit IKBKG/NEMO, which undergoes 'Lys-63'-linked polyubiquitination in a RIPK2-dependent process. 'Lys-63'-linked polyubiquitin chains attached to RIPK2 serve as docking sites for TAB2 and TAB3 and mediate the recruitment of MAP3K7/TAK1 to IKBKG/NEMO, inducing subsequent activation of IKBKB/IKKB. In turn, NF-kappa-B is released from NF-kappa-B inhibitors and translocates into the nucleus where it activates the transcription of hundreds of genes involved in immune response, growth control, or protection against apoptosis. The protein kinase activity is dispensable for the NOD1 and NOD2 signaling pathways. Contributes to the tyrosine phosphorylation of the guanine exchange factor ARHGEF2 through Src tyrosine kinase leading to NF-kappa-B activation by NOD2. Also involved in adaptive immunity: plays a role during engagement of the T-cell receptor (TCR) in promoting BCL10 phosphorylation and subsequent NF-kappa-B activation. Plays a role in the inactivation of RHOA in response to NGFR signaling. This chain is Receptor-interacting serine/threonine-protein kinase 2 (RIPK2), found in Bos taurus (Bovine).